The sequence spans 615 residues: Sodium-dependent noradrenaline transporter (615 aa).

The tract at residues 1-28 (MLLARMNPQVQPENGGAGPGSEQPPRKR) is disordered. The Cytoplasmic segment spans residues 1-60 (MLLARMNPQVQPENGGAGPGSEQPPRKRKEVLVVKERNGVQCLLASRDGDEQPRETWGKK). A helical membrane pass occupies residues 61–86 (IDFLLSVVGFAVDLANVWRFPYLCYK). 3 residues coordinate Na(+): G69, A71, and V72. D73 contacts (R)-noradrenaline. Residue D73 coordinates dopamine. N76 lines the Na(+) pocket. The (R)-noradrenaline site is built by Y85 and K86. Topologically, residues 87–90 (NGGG) are extracellular. A helical transmembrane segment spans residues 91–114 (AFLIPYTLFLIIAGMPLFYMELAL). Residues 115-133 (GQYNREGAATVWKICPFFK) lie on the Cytoplasmic side of the membrane. Residues 134–164 (GVGYAVILIALYVGFYYNVIIAWSLYYLFSS) traverse the membrane as a helical segment. Residues A143 and G147 each coordinate (R)-noradrenaline. A dopamine-binding site is contributed by A143. The Extracellular segment spans residues 165–231 (FTPTLPWTDC…SSGIHDIGLP (67 aa)). C174 and C183 are oxidised to a cystine. Residues N182, N190, and N196 are each glycosylated (N-linked (GlcNAc...) asparagine). A helical transmembrane segment spans residues 232 to 252 (QWQLLLCLIIVVIVLFFSLWK). The Cytoplasmic segment spans residues 253–255 (GVK). A helical membrane pass occupies residues 256–280 (TSGKVVWITATLPYLVLFVLLVHGI). Residues 281–304 (TLPGASNGINAYLHIDFYRLKEAT) are Extracellular-facing. Residues 305–330 (VWIDAATQIFFSLGAGFGVLIAFASY) traverse the membrane as a helical segment. F315 is a (R)-noradrenaline binding site. F315 contacts dopamine. S316 lines the Na(+) pocket. Residues 331–336 (NKFDNN) lie on the Cytoplasmic side of the membrane. The chain crosses the membrane as a helical span at residues 337-360 (CYRDALLTSTINCVTSFISGFAIF). N348 contributes to the Na(+) binding site. Topologically, residues 361–400 (SILGYMAHEHKVNIEDVATEGAGLVFILYPEAISTLSGST) are extracellular. Position 380 (E380) interacts with (R)-noradrenaline. E380 is a binding site for dopamine. Residues 401–426 (FWAIVFFIMLLALGIDSSMGGMEAVI) traverse the membrane as a helical segment. Positions 416 and 417 each coordinate Na(+). At 427–441 (TGLADDFQVLKRHRK) the chain is on the cytoplasmic side. The helical transmembrane segment at 442 to 462 (LFTFAVSFGTFLLALFCITKG) threads the bilayer. G463 is a topological domain (extracellular). Residues 464–490 (IYVLTLLDTFAAGTSILFAVLMEAIGV) form a helical membrane-spanning segment. The Cytoplasmic segment spans residues 491-520 (SWFYGVDRFSNDIQQMMGFKPGLYWRLCWK). The chain crosses the membrane as a helical span at residues 521–543 (FVSPAFLLFVVIVSIINFKPLTY). Residues 544 to 546 (DDY) are Extracellular-facing. The chain crosses the membrane as a helical span at residues 547 to 567 (IFPLWANWVGWGIAGSSMVLV). Residues 568–615 (PAYIVYKFFSTRGSIRERLAYGITPASEHHLVAQRDIRQFQLQHWLAI) are Cytoplasmic-facing.

The protein belongs to the sodium:neurotransmitter symporter (SNF) (TC 2.A.22) family. SLC6A2 subfamily. Monomer. Can form homodimers in the cell membrane; homodimerization is mostly mediated by cholesterol and lipids, and regulates neurotransmitter transport activity. Interacts with PRKCABP. Post-translationally, palmitoylated. Palmitoylation regulates protein levels and neurotransmitter transport.

The protein resides in the cell membrane. It is found in the cell projection. The protein localises to the axon. Its subcellular location is the synapse. It localises to the synaptosome. It catalyses the reaction (R)-noradrenaline(out) + chloride(out) + Na(+)(out) = (R)-noradrenaline(in) + chloride(in) + Na(+)(in). The enzyme catalyses dopamine(out) + chloride(out) + Na(+)(out) = dopamine(in) + chloride(in) + Na(+)(in). The catalysed reaction is dopamine(out) + chloride(out) + 2 Na(+)(out) = dopamine(in) + chloride(in) + 2 Na(+)(in). With respect to regulation, inhibited by nisoxetine, oxaprotiline and desipramin. Mediates sodium- and chloride-dependent transport of norepinephrine (also known as noradrenaline), the primary signaling neurotransmitter in the autonomic sympathetic nervous system. Is responsible for norepinephrine re-uptake and clearance from the synaptic cleft, thus playing a crucial role in norepinephrine inactivation and homeostasis. Can also mediate sodium- and chloride-dependent transport of dopamine. In Bos taurus (Bovine), this protein is Sodium-dependent noradrenaline transporter (SLC6A2).